A 62-amino-acid chain; its full sequence is Protein DsrB (62 aa).

Belongs to the DsrB family.

The sequence is that of Protein DsrB from Escherichia fergusonii (strain ATCC 35469 / DSM 13698 / CCUG 18766 / IAM 14443 / JCM 21226 / LMG 7866 / NBRC 102419 / NCTC 12128 / CDC 0568-73).